Reading from the N-terminus, the 155-residue chain is MNALFAWTDGACSGNPGPGGWGVLMRAMDGDRMLKERELSGGEAETTNNRMELMAAISALEALTRPSEITVTTDSAYVKNGVTQWIHGWKKNGWRTADRKPVKNADLWQRLDAAQARHQVRWEWIKGHAGHPENERADELARAGMAPFKPARVSG.

The 146-residue stretch at 1 to 146 folds into the RNase H type-1 domain; the sequence is MNALFAWTDG…ADELARAGMA (146 aa). The Mg(2+) site is built by Asp9, Glu52, Asp74, and Asp138.

Belongs to the RNase H family. In terms of assembly, monomer. Mg(2+) is required as a cofactor.

It is found in the cytoplasm. It catalyses the reaction Endonucleolytic cleavage to 5'-phosphomonoester.. Its function is as follows. Endonuclease that specifically degrades the RNA of RNA-DNA hybrids. This is Ribonuclease H from Paracoccus denitrificans (strain Pd 1222).